We begin with the raw amino-acid sequence, 211 residues long: Redox-sensing transcriptional repressor Rex (211 aa).

Residues 13–52 (TYLRILEELEAQGVHRTSSEQLGELAQVTAFQVRKDLSYF) constitute a DNA-binding region (H-T-H motif). 87–92 (GMGRLG) is an NAD(+) binding site.

Belongs to the transcriptional regulatory Rex family. Homodimer.

The protein localises to the cytoplasm. Its function is as follows. Modulates transcription in response to changes in cellular NADH/NAD(+) redox state. This is Redox-sensing transcriptional repressor Rex from Thermus aquaticus.